We begin with the raw amino-acid sequence, 140 residues long: Lipoprotein MlpG (140 aa).

The signal sequence occupies residues 1–17 (MKIINILFCLFLLMLNG). Cysteine 18 carries the N-palmitoyl cysteine lipid modification. Cysteine 18 carries the S-diacylglycerol cysteine lipid modification. Residues 22–57 (DTNTKQTKSRQKRDLTQKEATQEKPKSKSKEDLLRE) are disordered. Positions 33-57 (KRDLTQKEATQEKPKSKSKEDLLRE) are enriched in basic and acidic residues.

The protein belongs to the Multicopy lipoprotein (Mlp) family.

Its subcellular location is the cell outer membrane. Functionally, an outer membrane protein that may participate in pathogenesis. Some human Lyme disease patients have antibodies against this protein. The Mlp proteins probably undergo intragenic recombination, generating new alleles. The protein is Lipoprotein MlpG of Borreliella burgdorferi (strain ATCC 35210 / DSM 4680 / CIP 102532 / B31) (Borrelia burgdorferi).